The sequence spans 462 residues: DIMBOA UDP-glucosyltransferase BX9 (462 aa).

The Proton acceptor role is filled by His-24. Residue His-24 participates in an anthocyanidin binding. Asp-115 (charge relay) is an active-site residue. Residues Thr-137, Ala-336, Gln-338, His-353, Trp-356, Asn-357, Ser-358, and Glu-361 each coordinate UDP-alpha-D-glucose. Gly-376 contributes to the an anthocyanidin binding site. 2 residues coordinate UDP-alpha-D-glucose: Asp-377 and Gln-378.

It belongs to the UDP-glycosyltransferase family. Requires Mg(2+) as cofactor. Ca(2+) serves as cofactor. As to expression, expressed at the same levels in roots and shoots.

It catalyses the reaction DIMBOA + UDP-alpha-D-glucose = DIMBOA beta-D-glucoside + UDP + H(+). The enzyme catalyses DIBOA + UDP-alpha-D-glucose = DIBOA beta-D-glucoside + UDP + H(+). Functionally, glucosyltransferase involved in the last step of benzoxazinoid glucoside biosynthesis. Catalyzes the glucosylation of hydroxamic acids utilizing UDP-glucose as glucose doner, reducing the toxicity of these natural insecticides for storage. Can use DIMBOA and DIBOA as substrates, HMBOA (2-hydroxy-7-methoxy-2H-1,4-benzoxazin-3(4H)-one) and HBOA (2-hydroxy-2H-1,4-benzoxazin-3(4H)-one) with a lower efficiency, but not indole acetic acid or quercitin. In Zea mays (Maize), this protein is DIMBOA UDP-glucosyltransferase BX9 (BX9).